A 605-amino-acid polypeptide reads, in one-letter code: DNA primase (605 aa).

Residues C38–C62 form a CHC2-type zinc finger. The 82-residue stretch at D260–G341 folds into the Toprim domain. 3 residues coordinate Mg(2+): E266, D310, and D312.

The protein belongs to the DnaG primase family. As to quaternary structure, monomer. Interacts with DnaB. The cofactor is Zn(2+). Mg(2+) serves as cofactor.

The catalysed reaction is ssDNA + n NTP = ssDNA/pppN(pN)n-1 hybrid + (n-1) diphosphate.. RNA polymerase that catalyzes the synthesis of short RNA molecules used as primers for DNA polymerase during DNA replication. The polypeptide is DNA primase (Staphylococcus aureus (strain MSSA476)).